Consider the following 399-residue polypeptide: Tyrosine--tRNA ligase (399 aa).

The short motif at 42–51 (PTAPDLHLGH) is the 'HIGH' region element. The short motif at 226–230 (KMSKS) is the 'KMSKS' region element. Residue Lys229 participates in ATP binding. An S4 RNA-binding domain is found at 337 to 398 (LPVFQVVKQA…GKRKFASVVL (62 aa)).

The protein belongs to the class-I aminoacyl-tRNA synthetase family. TyrS type 2 subfamily. Homodimer.

It is found in the cytoplasm. It catalyses the reaction tRNA(Tyr) + L-tyrosine + ATP = L-tyrosyl-tRNA(Tyr) + AMP + diphosphate + H(+). Catalyzes the attachment of tyrosine to tRNA(Tyr) in a two-step reaction: tyrosine is first activated by ATP to form Tyr-AMP and then transferred to the acceptor end of tRNA(Tyr). The polypeptide is Tyrosine--tRNA ligase (Aromatoleum aromaticum (strain DSM 19018 / LMG 30748 / EbN1) (Azoarcus sp. (strain EbN1))).